Reading from the N-terminus, the 706-residue chain is Fatty acid oxidation complex subunit alpha (706 aa).

The enoyl-CoA hydratase stretch occupies residues 1–188 (MEKTFSLSRR…KMGLVDDVVP (188 aa)). The tract at residues 308-706 (RKVAKAVVLG…AMAAEGKTFY (399 aa)) is 3-hydroxyacyl-CoA dehydrogenase.

In the N-terminal section; belongs to the enoyl-CoA hydratase/isomerase family. The protein in the central section; belongs to the 3-hydroxyacyl-CoA dehydrogenase family. Heterotetramer of two alpha chains (FadJ) and two beta chains (FadI).

The protein resides in the cytoplasm. It catalyses the reaction a (3S)-3-hydroxyacyl-CoA = a (2E)-enoyl-CoA + H2O. It carries out the reaction a 4-saturated-(3S)-3-hydroxyacyl-CoA = a (3E)-enoyl-CoA + H2O. The catalysed reaction is a (3S)-3-hydroxyacyl-CoA + NAD(+) = a 3-oxoacyl-CoA + NADH + H(+). The enzyme catalyses (3S)-3-hydroxybutanoyl-CoA = (3R)-3-hydroxybutanoyl-CoA. The protein operates within lipid metabolism; fatty acid beta-oxidation. Functionally, catalyzes the formation of a hydroxyacyl-CoA by addition of water on enoyl-CoA. Also exhibits 3-hydroxyacyl-CoA epimerase and 3-hydroxyacyl-CoA dehydrogenase activities. This is Fatty acid oxidation complex subunit alpha from Shewanella amazonensis (strain ATCC BAA-1098 / SB2B).